Consider the following 480-residue polypeptide: UDP-N-acetylmuramate--L-alanine ligase (480 aa).

127–133 is an ATP binding site; sequence GTHGKTT.

It belongs to the MurCDEF family.

The protein resides in the cytoplasm. The enzyme catalyses UDP-N-acetyl-alpha-D-muramate + L-alanine + ATP = UDP-N-acetyl-alpha-D-muramoyl-L-alanine + ADP + phosphate + H(+). It functions in the pathway cell wall biogenesis; peptidoglycan biosynthesis. Functionally, cell wall formation. The chain is UDP-N-acetylmuramate--L-alanine ligase from Blochmanniella floridana.